We begin with the raw amino-acid sequence, 121 residues long: NADH-quinone oxidoreductase subunit A (121 aa).

The next 3 membrane-spanning stretches (helical) occupy residues 8–28, 65–85, and 93–113; these read YLPI…TIIG, LVAI…PWAI, and QGMI…FYII.

It belongs to the complex I subunit 3 family. As to quaternary structure, NDH-1 is composed of 14 different subunits. Subunits NuoA, H, J, K, L, M, N constitute the membrane sector of the complex.

Its subcellular location is the cell inner membrane. It carries out the reaction a quinone + NADH + 5 H(+)(in) = a quinol + NAD(+) + 4 H(+)(out). NDH-1 shuttles electrons from NADH, via FMN and iron-sulfur (Fe-S) centers, to quinones in the respiratory chain. The immediate electron acceptor for the enzyme in this species is believed to be a menaquinone. Couples the redox reaction to proton translocation (for every two electrons transferred, four hydrogen ions are translocated across the cytoplasmic membrane), and thus conserves the redox energy in a proton gradient. The chain is NADH-quinone oxidoreductase subunit A from Flavobacterium psychrophilum (strain ATCC 49511 / DSM 21280 / CIP 103535 / JIP02/86).